The following is a 414-amino-acid chain: Diaminopimelate decarboxylase (414 aa).

Position 52 is an N6-(pyridoxal phosphate)lysine (K52). Pyridoxal 5'-phosphate contacts are provided by residues G231 and 265 to 268 (EPGR). Positions 268, 304, and 308 each coordinate substrate. The Proton donor role is filled by C334. Residues E335 and Y362 each contribute to the substrate site. Y362 is a pyridoxal 5'-phosphate binding site.

Belongs to the Orn/Lys/Arg decarboxylase class-II family. LysA subfamily. Homodimer. The cofactor is pyridoxal 5'-phosphate.

The catalysed reaction is meso-2,6-diaminopimelate + H(+) = L-lysine + CO2. The protein operates within amino-acid biosynthesis; L-lysine biosynthesis via DAP pathway; L-lysine from DL-2,6-diaminopimelate: step 1/1. In terms of biological role, specifically catalyzes the decarboxylation of meso-diaminopimelate (meso-DAP) to L-lysine. In Neisseria meningitidis serogroup B (strain ATCC BAA-335 / MC58), this protein is Diaminopimelate decarboxylase.